Reading from the N-terminus, the 171-residue chain is Spiderine-2a (171 aa).

An N-terminal signal peptide occupies residues 1–18; the sequence is MKFALVLLGVCAFYLVNA. Residues 19 to 58 constitute a propeptide, removed in mature form; that stretch reads TGDLETELEASELQELQEALDLIAETPLESLEAEELEEAR. Residues 59-104 form a linear cationic cytotoxin domain region; it reads KFKLPKINWGKLASKAKDVYKKGQKLAKNKNVKKALKYGKQLAENL. Positions 118-171 constitute an Oxytoxin-type inhibitor cystine knot (ICK) domain; that stretch reads NNKCWAIGTRCTDDCDCCPEHHCHCPAKSWTFGLIPCSCQVTESDKVNKCPPAE. 5 disulfides stabilise this stretch: C121–C135, C128–C140, C132–C167, C134–C156, and C142–C154.

In terms of processing, disulfide bonds. Expressed by the venom gland.

It localises to the secreted. Has antimicrobial, insecticidal, cytolytic and cytotoxic activity. This chain is Spiderine-2a, found in Oxyopes takobius (Lynx spider).